The sequence spans 449 residues: 3-phosphoshikimate 1-carboxyvinyltransferase (449 aa).

Residues Met1–Arg23 form a disordered region. 3-phosphoshikimate-binding residues include Lys28, Ser29, and Arg33. Lys28 contacts phosphoenolpyruvate. Residues Gly100 and Arg128 each coordinate phosphoenolpyruvate. 3-phosphoshikimate contacts are provided by Ser173, Gln175, Asp326, and Lys353. Residue Gln175 participates in phosphoenolpyruvate binding. Asp326 (proton acceptor) is an active-site residue. Arg357 and Arg402 together coordinate phosphoenolpyruvate.

Belongs to the EPSP synthase family. In terms of assembly, monomer.

The protein localises to the cytoplasm. It catalyses the reaction 3-phosphoshikimate + phosphoenolpyruvate = 5-O-(1-carboxyvinyl)-3-phosphoshikimate + phosphate. The protein operates within metabolic intermediate biosynthesis; chorismate biosynthesis; chorismate from D-erythrose 4-phosphate and phosphoenolpyruvate: step 6/7. In terms of biological role, catalyzes the transfer of the enolpyruvyl moiety of phosphoenolpyruvate (PEP) to the 5-hydroxyl of shikimate-3-phosphate (S3P) to produce enolpyruvyl shikimate-3-phosphate and inorganic phosphate. This Pseudomonas sp. (strain PG2982) protein is 3-phosphoshikimate 1-carboxyvinyltransferase.